Here is a 284-residue protein sequence, read N- to C-terminus: D-tagatose-1,6-bisphosphate aldolase subunit GatY (284 aa).

Catalysis depends on Asp-82, which acts as the Proton donor. Zn(2+) is bound by residues His-83 and His-180. Gly-181 lines the dihydroxyacetone phosphate pocket. A Zn(2+)-binding site is contributed by His-208. Dihydroxyacetone phosphate is bound by residues 209 to 211 (GAS) and 230 to 233 (NVAT).

Belongs to the class II fructose-bisphosphate aldolase family. TagBP aldolase GatY subfamily. Forms a complex with GatZ. The cofactor is Zn(2+).

The enzyme catalyses D-tagatofuranose 1,6-bisphosphate = D-glyceraldehyde 3-phosphate + dihydroxyacetone phosphate. Its pathway is carbohydrate metabolism; D-tagatose 6-phosphate degradation; D-glyceraldehyde 3-phosphate and glycerone phosphate from D-tagatose 6-phosphate: step 2/2. Catalytic subunit of the tagatose-1,6-bisphosphate aldolase GatYZ, which catalyzes the reversible aldol condensation of dihydroxyacetone phosphate (DHAP or glycerone-phosphate) with glyceraldehyde 3-phosphate (G3P) to produce tagatose 1,6-bisphosphate (TBP). Requires GatZ subunit for full activity and stability. Is involved in the catabolism of galactitol. This chain is D-tagatose-1,6-bisphosphate aldolase subunit GatY, found in Salmonella paratyphi B (strain ATCC BAA-1250 / SPB7).